A 272-amino-acid chain; its full sequence is Transcription factor PU.1 (272 aa).

Residues 126-165 (SPAHQQSSDEEEGERQSPPLEVSDGEADGLEPGPGLLHGE) form a disordered region. Residues serine 142 and serine 148 each carry the phosphoserine modification. Low complexity predominate over residues 155-165 (LEPGPGLLHGE). Positions 172–255 (IRLYQFLLDL…VKKKLTYQFS (84 aa)) form a DNA-binding region, ETS. Lysine 219, arginine 232, arginine 235, and lysine 245 together coordinate DNA.

It belongs to the ETS family. Binds DNA as a monomer. Can form homomers. Directly interacts with CEBPD/NF-IL6-beta; this interaction does not affect DNA-binding properties of each partner. Interacts with NONO/p54(nrb). Interacts with RUNX1/AML1. Interacts with GFI1; the interaction represses SPI1 transcriptional activity, hence blocks SPI1-induced macrophage differentiation of myeloid progenitor cells. Interacts with CEBPE. Interacts with IRF4/Pip and IRF8. Interacts with JUN. Interacts with RB1. Interacts with TBP. As to expression, expressed in spleen, thymus and bone-marrow macrophages.

It localises to the nucleus. With respect to regulation, transcriptional activity at macrophage-specific genes is inhibited by interaction with GFI1, which results in inhibition of SPI1-induced macrophage differentiation of myeloid progenitor cells, but not that of the granulocyte lineage. In terms of biological role, pioneer transcription factor, which controls hematopoietic cell fate by decompacting stem cell heterochromatin and allowing other transcription factors to enter otherwise inaccessible genomic sites. Once in open chromatin, can directly control gene expression by binding genetic regulatory elements and can also more broadly influence transcription by recruiting transcription factors, such as interferon regulatory factors (IRFs), to otherwise inaccessible genomic regions. Transcriptionally activates genes important for myeloid and lymphoid lineages, such as CSF1R. Transcriptional activation from certain promoters, possibly containing low affinity binding sites, is achieved cooperatively with other transcription factors. FCER1A transactivation is achieved in cooperation with GATA1. May be particularly important for the pro- to pre-B cell transition. Binds (via the ETS domain) onto the purine-rich DNA core sequence 5'-GAGGAA-3', also known as the PU-box. In vitro can bind RNA and interfere with pre-mRNA splicing. The sequence is that of Transcription factor PU.1 (Spi1) from Mus musculus (Mouse).